A 337-amino-acid chain; its full sequence is Ketol-acid reductoisomerase (NADP(+)) (337 aa).

The KARI N-terminal Rossmann domain maps to 2–182 (AKIFYDNDAD…GATRAGVLLT (181 aa)). NADP(+)-binding positions include 25 to 28 (YGSQ), Ser51, Ser53, and 83 to 86 (DTSQ). The active site involves His108. Gly134 contacts NADP(+). Residues 183–328 (TFAEETETDL…ANLRKMMPFI (146 aa)) form the KARI C-terminal knotted domain. Residues Asp191, Glu195, Glu227, and Glu231 each contribute to the Mg(2+) site. Ser252 is a binding site for substrate.

It belongs to the ketol-acid reductoisomerase family. Mg(2+) serves as cofactor.

It carries out the reaction (2R)-2,3-dihydroxy-3-methylbutanoate + NADP(+) = (2S)-2-acetolactate + NADPH + H(+). It catalyses the reaction (2R,3R)-2,3-dihydroxy-3-methylpentanoate + NADP(+) = (S)-2-ethyl-2-hydroxy-3-oxobutanoate + NADPH + H(+). Its pathway is amino-acid biosynthesis; L-isoleucine biosynthesis; L-isoleucine from 2-oxobutanoate: step 2/4. The protein operates within amino-acid biosynthesis; L-valine biosynthesis; L-valine from pyruvate: step 2/4. Functionally, involved in the biosynthesis of branched-chain amino acids (BCAA). Catalyzes an alkyl-migration followed by a ketol-acid reduction of (S)-2-acetolactate (S2AL) to yield (R)-2,3-dihydroxy-isovalerate. In the isomerase reaction, S2AL is rearranged via a Mg-dependent methyl migration to produce 3-hydroxy-3-methyl-2-ketobutyrate (HMKB). In the reductase reaction, this 2-ketoacid undergoes a metal-dependent reduction by NADPH to yield (R)-2,3-dihydroxy-isovalerate. This is Ketol-acid reductoisomerase (NADP(+)) from Sorangium cellulosum (strain So ce56) (Polyangium cellulosum (strain So ce56)).